The primary structure comprises 759 residues: RNA-binding protein 28 (759 aa).

A2 is subject to N-acetylalanine. The region spanning 4–80 (LTLFVGRLPP…CKINVTVAKK (77 aa)) is the RRM 1 domain. A disordered region spans residues 84–105 (NKTKEKGKNENSECPKKEPKAK). The segment covering 85-101 (KTKEKGKNENSECPKKE) has biased composition (basic and acidic residues). In terms of domain architecture, RRM 2 spans 114 to 191 (ARLIIRNLSF…RTVAVDWAVA (78 aa)). Phosphoserine is present on S122. The segment at 201–330 (VSAIGEEKSH…NKKKRKLPSD (130 aa)) is disordered. Positions 205-224 (GEEKSHESKHQESVKKKGRE) are enriched in basic and acidic residues. 2 stretches are compositionally biased toward acidic residues: residues 225-256 (EEDM…EEEN) and 284-313 (SEED…EEQE). RRM domains are found at residues 335-419 (KTVF…LAVT) and 487-597 (TRLC…RSLQ). S397 is subject to Phosphoserine. The tract at residues 594–759 (RSLQKMRSKP…LAKRSKWFDS (166 aa)) is disordered. A compositionally biased stretch (basic and acidic residues) spans 615–640 (PAKDQQQKAAQHHTEEQSKVPPEQKR). A Glycyl lysine isopeptide (Lys-Gly) (interchain with G-Cter in SUMO2) cross-link involves residue K653. A compositionally biased stretch (basic residues) spans 689–698 (VKPVHPKKPK). The span at 700 to 715 (QINQWKQEKQQLSSEQ) shows a compositional bias: polar residues.

As to quaternary structure, interacts with U1, U2, U4, U5, and U6 spliceosomal small nuclear RNAs (snRNAs). As to expression, ubiquitously expressed.

It localises to the nucleus. The protein localises to the nucleolus. In terms of biological role, nucleolar component of the spliceosomal ribonucleoprotein complexes. This is RNA-binding protein 28 (RBM28) from Homo sapiens (Human).